Here is a 163-residue protein sequence, read N- to C-terminus: RxLR effector protein PITG_13625 (163 aa).

An N-terminal signal peptide occupies residues 1 to 23; it reads MKVSKAIVALAALCMALLAPAAG. Positions 37-52 match the RxLR-dEER motif; sequence RHLRQESAELATTPEE.

Belongs to the RxLR effector family.

The protein resides in the secreted. It localises to the host cell membrane. Its function is as follows. Effector that enhances P.infestans colonization of Nicotiana benthamiana leaves. The chain is RxLR effector protein PITG_13625 from Phytophthora infestans (strain T30-4) (Potato late blight agent).